A 344-amino-acid polypeptide reads, in one-letter code: uncharacterized protein (344 aa).

The next 8 helical transmembrane spans lie at 25-45 (GAGWACGVTVVLPPPGTVGAV), 68-88 (FVDALLLAGGSAYGLAAADGV), 104-124 (GVVPIVPGAVIFDLPVGGWNC), 133-153 (SACAAAGVDVAVGTVGVGVGA), 161-181 (GVGTASATLQSGVTVGVLAVV), 224-244 (LGAFNTPFNTTIGVIACDAAL), 276-296 (VFALATGAVAVPPEAGVPAAL), and 302-322 (LVTAVGAAAADCLARAVLAGV).

This sequence belongs to the peptidase S58 family.

It is found in the cell membrane. Functionally, aminopeptidase. This is an uncharacterized protein from Mycobacterium bovis (strain ATCC BAA-935 / AF2122/97).